Here is a 712-residue protein sequence, read N- to C-terminus: Envelope glycoprotein gp160 (712 aa).

The N-terminal stretch at 1–24 (MCGRNQLFVASLLASACLIYCVQY) is a signal peptide. Residues 25–673 (VTVFYGVPVW…LTSWIKYIQY (649 aa)) are Extracellular-facing. N-linked (GlcNAc...) asparagine; by host glycosylation is present at Asn36. An intrachain disulfide couples Cys43 to Cys56. 25 N-linked (GlcNAc...) asparagine; by host glycosylation sites follow: Asn69, Asn78, Asn113, Asn119, Asn131, Asn137, Asn145, Asn160, Asn173, Asn200, Asn232, Asn235, Asn242, Asn266, Asn272, Asn283, Asn294, Asn304, Asn359, Asn392, Asn402, Asn405, Asn442, Asn457, and Asn460. Disulfide bonds link Cys100–Cys208, Cys107–Cys199, Cys112–Cys157, Cys221–Cys251, and Cys231–Cys243. A V1 region spans residues 112 to 156 (CNSTTAKNTTSTPTTTTTANTTIGENSSCIRTDNCTGLGEEEMVD). A V2 region spans residues 157–199 (CQFNMTGLERDKKKLYNETWYSKDVVCESKDTKKEKTCYMNHC). The segment at 299–331 (CKRPGNKTVVPITLMSGLVFHSQPINRRPRQAW) is V3. Cys299 and Cys332 are oxidised to a cystine. 2 cysteine pairs are disulfide-bonded: Cys384–Cys441 and Cys391–Cys414. Residues 391–414 (CNMTWFLNWVENRTNQTQHNYVPC) are V4. Residues 457–463 (NQTNITF) form a V5 region. Positions 506-526 (GVFVLGFLGFLTTAGAAMGAA) are fusion peptide. Residues 569–585 (LQARVTAIEKYLKDQAQ) are immunosuppression. N-linked (GlcNAc...) asparagine; by host glycans are attached at residues Asn605, Asn614, and Asn630. Residues 614–646 (NITWQEWEQRIRNLEANISESLEQAQIQQEKNM) adopt a coiled-coil conformation. The interval 651–672 (KLNSWDVFSNWFDLTSWIKYIQ) is MPER; binding to GalCer. The helical transmembrane segment at 674 to 694 (GVYIVVGIIVLRMVIYVVQML) threads the bilayer. Topologically, residues 695-712 (SRLRKGYRPVFSSPPAYS) are cytoplasmic. Positions 701 to 704 (YRPV) match the YXXV motif; contains endocytosis signal motif.

As to quaternary structure, the mature envelope protein (Env) consists of a homotrimer of non-covalently associated gp120-gp41 heterodimers. The resulting complex protrudes from the virus surface as a spike. There seems to be as few as 10 spikes on the average virion. Interacts with human CD4, CCR5 and CXCR4, to form a P4HB/PDI-CD4-CXCR4-gp120 complex. Gp120 also interacts with the C-type lectins CD209/DC-SIGN and CLEC4M/DC-SIGNR (collectively referred to as DC-SIGN(R)). Gp120 and gp41 interact with GalCer. The mature envelope protein (Env) consists of a homotrimer of non-covalently associated gp120-gp41 heterodimers. The resulting complex protrudes from the virus surface as a spike. There seems to be as few as 10 spikes on the average virion. In terms of processing, specific enzymatic cleavages in vivo yield mature proteins. Envelope glycoproteins are synthesized as an inactive precursor that is heavily N-glycosylated and processed likely by host cell furin in the Golgi to yield the mature SU and TM proteins. The cleavage site between SU and TM requires the minimal sequence [KR]-X-[KR]-R.

Its subcellular location is the virion membrane. It localises to the host cell membrane. The protein resides in the host endosome membrane. Its function is as follows. The surface protein gp120 (SU) attaches the virus to the host lymphoid cell by binding to the primary receptor CD4. This interaction induces a structural rearrangement creating a high affinity binding site for a chemokine coreceptor like CXCR4 and/or CCR5. This peculiar 2 stage receptor-interaction strategy allows gp120 to maintain the highly conserved coreceptor-binding site in a cryptic conformation, protected from neutralizing antibodies. Since CD4 also displays a binding site for the disulfide-isomerase P4HB/PDI, a P4HB/PDI-CD4-CXCR4-gp120 complex may form. In that complex, P4HB/PDI could reach and reduce gp120 disulfide bonds, causing major conformational changes in gp120. TXN, another PDI family member could also be involved in disulfide rearrangements in Env during fusion. These changes are transmitted to the transmembrane protein gp41 and are thought to activate its fusogenic potential by unmasking its fusion peptide. Functionally, the surface protein gp120 is a ligand for CD209/DC-SIGN and CLEC4M/DC-SIGNR, which are respectively found on dendritic cells (DCs), and on endothelial cells of liver sinusoids and lymph node sinuses. These interactions allow capture of viral particles at mucosal surfaces by these cells and subsequent transmission to permissive cells. DCs are professional antigen presenting cells, critical for host immunity by inducing specific immune responses against a broad variety of pathogens. They act as sentinels in various tissues where they take up antigen, process it, and present it to T-cells following migration to lymphoid organs. HIV subverts the migration properties of dendritic cells to gain access to CD4+ T-cells in lymph nodes. Virus transmission to permissive T-cells occurs either in trans (without DCs infection, through viral capture and transmission), or in cis (following DCs productive infection, through the usual CD4-gp120 interaction), thereby inducing a robust infection. In trans infection, bound virions remain infectious over days and it is proposed that they are not degraded, but protected in non-lysosomal acidic organelles within the DCs close to the cell membrane thus contributing to the viral infectious potential during DCs' migration from the periphery to the lymphoid tissues. On arrival at lymphoid tissues, intact virions recycle back to DCs' cell surface allowing virus transmission to CD4+ T-cells. Virion capture also seems to lead to MHC-II-restricted viral antigen presentation, and probably to the activation of HIV-specific CD4+ cells. In terms of biological role, the transmembrane protein gp41 (TM) acts as a class I viral fusion protein. Under the current model, the protein has at least 3 conformational states: pre-fusion native state, pre-hairpin intermediate state, and post-fusion hairpin state. During fusion of viral and target intracellular membranes, the coiled coil regions (heptad repeats) assume a trimer-of-hairpins structure, positioning the fusion peptide in close proximity to the C-terminal region of the ectodomain. The formation of this structure appears to drive apposition and subsequent fusion of viral and target cell membranes. Complete fusion occurs in host cell endosomes and is dynamin-dependent, however some lipid transfer might occur at the plasma membrane. The virus undergoes clathrin-dependent internalization long before endosomal fusion, thus minimizing the surface exposure of conserved viral epitopes during fusion and reducing the efficacy of inhibitors targeting these epitopes. Membranes fusion leads to delivery of the nucleocapsid into the cytoplasm. The envelope glycoprotein gp160 precursor down-modulates cell surface CD4 antigen by interacting with it in the endoplasmic reticulum and blocking its transport to the cell surface. Its function is as follows. The gp120-gp41 heterodimer seems to contribute to T-cell depletion during HIV-1 infection. The envelope glycoproteins expressed on the surface of infected cells induce apoptosis through an interaction with uninfected cells expressing the receptor (CD4) and the coreceptors CXCR4 or CCR5. This type of bystander killing may be obtained by at least three distinct mechanisms. First, the interaction between the 2 cells can induce cellular fusion followed by nuclear fusion within the syncytium. Syncytia are condemned to die from apoptosis. Second, the 2 interacting cells may not fuse entirely and simply exchange plasma membrane lipids, after a sort of hemifusion process, followed by rapid death. Third, it is possible that virus-infected cells, on the point of undergoing apoptosis, fuse with CD4-expressing cells, in which case apoptosis is rapidly transmitted from one cell to the other and thus occurs in a sort of contagious fashion. Functionally, the gp120-gp41 heterodimer allows rapid transcytosis of the virus through CD4 negative cells such as simple epithelial monolayers of the intestinal, rectal and endocervical epithelial barriers. Both gp120 and gp41 specifically recognize glycosphingolipids galactosyl-ceramide (GalCer) or 3' sulfo-galactosyl-ceramide (GalS) present in the lipid rafts structures of epithelial cells. Binding to these alternative receptors allows the rapid transcytosis of the virus through the epithelial cells. This transcytotic vesicle-mediated transport of virions from the apical side to the basolateral side of the epithelial cells does not involve infection of the cells themselves. This Homo sapiens (Human) protein is Envelope glycoprotein gp160 (env).